The following is a 205-amino-acid chain: ITG-like peptide (205 aa).

Positions 1–15 (MRVYAAITLVLVANT) are cleaved as a signal peptide. 2 propeptides span residues 16–188 (AYIG…TSGE) and 202–205 (MPFA).

In terms of tissue distribution, expressed throughout the nervous system (at protein level).

The protein resides in the secreted. The chain is ITG-like peptide from Camponotus floridanus (Florida carpenter ant).